Consider the following 617-residue polypeptide: Lipoteichoic acid synthase-like YvgJ (617 aa).

Residues 1–10 lie on the Cytoplasmic side of the membrane; sequence MKGTFFHNQR. The helical transmembrane segment at 11–31 threads the bilayer; it reads FLCFSILFMWIKTYVIYKLGF. Topologically, residues 32-41 are extracellular; sequence DLQIDTLLEE. A helical membrane pass occupies residues 42-62; the sequence is LMLLVNPLSFILPLFGIGLFL. The Cytoplasmic portion of the chain corresponds to 63-68; it reads KENKQR. A helical transmembrane segment spans residues 69 to 89; it reads AFLLIANLVLTVILISNTIFY. Topologically, residues 90–115 are extracellular; that stretch reads GFYIDFITIPVLFQASNMSDMGSSVK. A helical transmembrane segment spans residues 116–136; sequence ELFHPLFIALFVDLVFLLLFA. Over 137-153 the chain is Cytoplasmic; the sequence is RKTKHPQTKAAPHTIKR. A helical membrane pass occupies residues 154–171; sequence YYAASCGMLLCTLALAEV. The Extracellular segment spans residues 172–617; sequence QQPKLLAHSF…LNGDLLRFSE (446 aa). E251 and T293 together coordinate Mn(2+). The active site involves T293. H408 serves as a coordination point for substrate. D467 and H468 together coordinate Mn(2+).

Belongs to the LTA synthase family. Post-translationally, proteolytically cleaved.

The protein resides in the cell membrane. It is found in the secreted. The sequence is that of Lipoteichoic acid synthase-like YvgJ (yvgJ) from Bacillus subtilis (strain 168).